Here is a 170-residue protein sequence, read N- to C-terminus: Myosin regulatory light chain 2, skeletal muscle isoform type 1 (170 aa).

N,N,N-trimethylalanine is present on Ala2. A phosphoserine mark is found at Ser16 and Ser17. A phosphothreonine mark is found at Thr26 and Thr36. The region spanning 26-61 is the EF-hand 1 domain; it reads TQIQEFKEAFTVIDQNRDGIIDKEDLRDTFAAMGRL. The Ca(2+) site is built by Asp39, Asn41, Asp43, and Asp50. Ser76 is subject to Phosphoserine. EF-hand domains are found at residues 96-131 and 132-167; these read DPEDVITGAFKVLDPEGKGTIKKQFLEELLITQCDR and FSQEEIKNMWAAFSPDVGGNVDYKNICYVITHGDAK. Residue Thr102 is modified to Phosphothreonine.

As to quaternary structure, myosin is a hexamer of 2 heavy chains and 4 light chains.

The protein is Myosin regulatory light chain 2, skeletal muscle isoform type 1 of Oryctolagus cuniculus (Rabbit).